The chain runs to 520 residues: Phosphoenolpyruvate carboxykinase (ATP) (520 aa).

Arginine 61, phenylalanine 196, and lysine 202 together coordinate substrate. Residues lysine 202, histidine 222, and 238–246 contribute to the ATP site; that span reads GLSGTGKTT. The Mn(2+) site is built by lysine 202 and histidine 222. Aspartate 259 is a binding site for Mn(2+). Residues glutamate 287, arginine 324, 443–444, and threonine 449 each bind ATP; that span reads RI. Arginine 324 lines the substrate pocket.

It belongs to the phosphoenolpyruvate carboxykinase (ATP) family. Mn(2+) is required as a cofactor.

The protein resides in the cytoplasm. It catalyses the reaction oxaloacetate + ATP = phosphoenolpyruvate + ADP + CO2. The protein operates within carbohydrate biosynthesis; gluconeogenesis. Its function is as follows. Involved in the gluconeogenesis. Catalyzes the conversion of oxaloacetate (OAA) to phosphoenolpyruvate (PEP) through direct phosphoryl transfer between the nucleoside triphosphate and OAA. The polypeptide is Phosphoenolpyruvate carboxykinase (ATP) (Amoebophilus asiaticus (strain 5a2)).